We begin with the raw amino-acid sequence, 134 residues long: Small ribosomal subunit protein uS11 (134 aa).

It belongs to the universal ribosomal protein uS11 family. As to quaternary structure, part of the 30S ribosomal subunit. Interacts with proteins S7 and S18. Binds to IF-3.

Located on the platform of the 30S subunit, it bridges several disparate RNA helices of the 16S rRNA. Forms part of the Shine-Dalgarno cleft in the 70S ribosome. This chain is Small ribosomal subunit protein uS11, found in Corynebacterium glutamicum (strain R).